Reading from the N-terminus, the 218-residue chain is Octanoyltransferase (218 aa).

In terms of domain architecture, BPL/LPL catalytic spans 30-217 (GEAGELVWLV…SFARNFPPLA (188 aa)). Substrate-binding positions include 68–75 (RGGQYTYH), 148–150 (AIG), and 161–163 (GIA). Cys179 acts as the Acyl-thioester intermediate in catalysis.

The protein belongs to the LipB family.

The protein resides in the cytoplasm. The enzyme catalyses octanoyl-[ACP] + L-lysyl-[protein] = N(6)-octanoyl-L-lysyl-[protein] + holo-[ACP] + H(+). The protein operates within protein modification; protein lipoylation via endogenous pathway; protein N(6)-(lipoyl)lysine from octanoyl-[acyl-carrier-protein]: step 1/2. Its function is as follows. Catalyzes the transfer of endogenously produced octanoic acid from octanoyl-acyl-carrier-protein onto the lipoyl domains of lipoate-dependent enzymes. Lipoyl-ACP can also act as a substrate although octanoyl-ACP is likely to be the physiological substrate. This chain is Octanoyltransferase, found in Paracoccus denitrificans (strain Pd 1222).